The sequence spans 518 residues: Glutamate--cysteine ligase (518 aa).

The protein belongs to the glutamate--cysteine ligase type 1 family. Type 1 subfamily.

It carries out the reaction L-cysteine + L-glutamate + ATP = gamma-L-glutamyl-L-cysteine + ADP + phosphate + H(+). It functions in the pathway sulfur metabolism; glutathione biosynthesis; glutathione from L-cysteine and L-glutamate: step 1/2. In Escherichia coli O7:K1 (strain IAI39 / ExPEC), this protein is Glutamate--cysteine ligase.